A 207-amino-acid chain; its full sequence is Gap junction epsilon-1 protein (207 aa).

Residues 1–22 (MSLNYIKNFYEGCLRPPTVIGQ) are Cytoplasmic-facing. A helical membrane pass occupies residues 23 to 43 (FHTLFFGSVRTFFLGVLGFAV). At 44–74 (YGNEALHFSCDPDKRELNLYCYNQFRPITPQ) the chain is on the extracellular side. Intrachain disulfides connect Cys53-Cys161 and Cys64-Cys147. Residues 75–95 (VFWALQLVTVLVPGAVFHLYA) traverse the membrane as a helical segment. Topologically, residues 96 to 111 (ACKNIDQEEILHRPMS) are cytoplasmic. Residues 112 to 132 (TVFYIISVLLRIILEVLAFWL) form a helical membrane-spanning segment. The Extracellular portion of the chain corresponds to 133–175 (QSHLFGFLVDPIFMCDVTGLGKILNVSKCMVPEHFEKTIFLSA). A helical membrane pass occupies residues 176–196 (MYTFTIITILLCIAEIFEILF). Topologically, residues 197–207 (RRLGYLNQPMT) are cytoplasmic.

It belongs to the connexin family. Beta-type (group I) subfamily. As to quaternary structure, a connexon is composed of a hexamer of connexins.

The protein resides in the cell membrane. In terms of biological role, has significant hemichannel activity. However, has only low-efficiency gap junction activity and probably does not function as a gap junction channel in vivo. This chain is Gap junction epsilon-1 protein, found in Danio rerio (Zebrafish).